We begin with the raw amino-acid sequence, 906 residues long: Translation initiation factor IF-2 (906 aa).

2 disordered regions span residues 134-250 and 269-317; these read RQRN…GSHV and HLSA…FERP. A compositionally biased stretch (basic and acidic residues) spans 136–177; that stretch reads RNLDEQQRLAESDRVRDEEIQRKRDEEQAAKDRAEAERKAAE. Low complexity-rich tracts occupy residues 178 to 232 and 287 to 305; these read EAAA…STPA and GRPG…RGSN. Residues 405–574 form the tr-type G domain; that stretch reads TRPPVVTIMG…SLQAEVLELK (170 aa). The segment at 414–421 is G1; that stretch reads GHVDHGKT. Position 414–421 (414–421) interacts with GTP; it reads GHVDHGKT. Residues 439-443 are G2; sequence GITQH. The tract at residues 460–463 is G3; that stretch reads DTPG. GTP is bound by residues 460–464 and 514–517; these read DTPGH and NKID. Residues 514–517 form a G4 region; the sequence is NKID. Residues 550-552 form a G5 region; the sequence is SAK.

This sequence belongs to the TRAFAC class translation factor GTPase superfamily. Classic translation factor GTPase family. IF-2 subfamily.

The protein localises to the cytoplasm. Functionally, one of the essential components for the initiation of protein synthesis. Protects formylmethionyl-tRNA from spontaneous hydrolysis and promotes its binding to the 30S ribosomal subunits. Also involved in the hydrolysis of GTP during the formation of the 70S ribosomal complex. The polypeptide is Translation initiation factor IF-2 (Xanthomonas oryzae pv. oryzae (strain MAFF 311018)).